We begin with the raw amino-acid sequence, 457 residues long: Putative ankyrin repeat protein L112 (457 aa).

11 ANK repeats span residues 62 to 91 (QRIT…NHNP), 104 to 132 (SKDT…ASIN), 133 to 162 (SSSL…EIIN), 193 to 219 (YINE…LDCS), 220 to 249 (ITVD…DPRK), 251 to 279 (KCWA…KPKE), 281 to 309 (NVDA…DTIT), 310 to 339 (RRDW…SQKS), 341 to 368 (NKAL…DFRQ), 400 to 429 (NNNE…DYNP), and 431 to 457 (KDQL…DTLK).

This chain is Putative ankyrin repeat protein L112, found in Acanthamoeba polyphaga mimivirus (APMV).